Consider the following 490-residue polypeptide: Glucose-6-phosphate 1-dehydrogenase (490 aa).

Residues R49, 91–92 (DV), and K146 each bind NADP(+). The substrate site is built by H176, K180, E214, and D233. H238 serves as the catalytic Proton acceptor. Substrate-binding residues include K338 and K343.

Belongs to the glucose-6-phosphate dehydrogenase family.

It carries out the reaction D-glucose 6-phosphate + NADP(+) = 6-phospho-D-glucono-1,5-lactone + NADPH + H(+). Its pathway is carbohydrate degradation; pentose phosphate pathway; D-ribulose 5-phosphate from D-glucose 6-phosphate (oxidative stage): step 1/3. In terms of biological role, catalyzes the oxidation of glucose 6-phosphate to 6-phosphogluconolactone. In Buchnera aphidicola subsp. Schizaphis graminum (strain Sg), this protein is Glucose-6-phosphate 1-dehydrogenase.